Consider the following 255-residue polypeptide: 2-succinyl-6-hydroxy-2,4-cyclohexadiene-1-carboxylate synthase (255 aa).

This sequence belongs to the AB hydrolase superfamily. MenH family. Monomer.

It carries out the reaction 5-enolpyruvoyl-6-hydroxy-2-succinyl-cyclohex-3-ene-1-carboxylate = (1R,6R)-6-hydroxy-2-succinyl-cyclohexa-2,4-diene-1-carboxylate + pyruvate. It functions in the pathway quinol/quinone metabolism; 1,4-dihydroxy-2-naphthoate biosynthesis; 1,4-dihydroxy-2-naphthoate from chorismate: step 3/7. Its pathway is quinol/quinone metabolism; menaquinone biosynthesis. Functionally, catalyzes a proton abstraction reaction that results in 2,5-elimination of pyruvate from 2-succinyl-5-enolpyruvyl-6-hydroxy-3-cyclohexene-1-carboxylate (SEPHCHC) and the formation of 2-succinyl-6-hydroxy-2,4-cyclohexadiene-1-carboxylate (SHCHC). In Serratia proteamaculans (strain 568), this protein is 2-succinyl-6-hydroxy-2,4-cyclohexadiene-1-carboxylate synthase.